Consider the following 278-residue polypeptide: Transcription initiation factor TFIID subunit 9 (278 aa).

A disordered region spans residues 193–278 (TTTKTVGSSG…EEEEFEFVTN (86 aa)). The segment covering 200–210 (SSGGSGGGGGQ) has biased composition (gly residues). Low complexity predominate over residues 231 to 240 (AAAVGSIAGA). Residues 241–259 (SGSGAGSASGGGGGGGSSG) show a composition bias toward gly residues. The segment covering 269 to 278 (EEEEFEFVTN) has biased composition (acidic residues).

Belongs to the TAF9 family. As to quaternary structure, belongs to the TFIID complex which is composed of TATA binding protein (Tbp) and a number of TBP-associated factors (TAFs). Taf9 and Taf6 exist as a heterotetramer. Interacts with e(y)2.

It localises to the nucleus. TFIID is a multimeric protein complex that plays a central role in mediating promoter responses to various activators and repressors. This chain is Transcription initiation factor TFIID subunit 9, found in Drosophila melanogaster (Fruit fly).